The chain runs to 174 residues: Crossover junction endodeoxyribonuclease RuvC (174 aa).

Active-site residues include Asp-8, Glu-69, and Asp-141. Positions 8, 69, and 141 each coordinate Mg(2+).

This sequence belongs to the RuvC family. As to quaternary structure, homodimer which binds Holliday junction (HJ) DNA. The HJ becomes 2-fold symmetrical on binding to RuvC with unstacked arms; it has a different conformation from HJ DNA in complex with RuvA. In the full resolvosome a probable DNA-RuvA(4)-RuvB(12)-RuvC(2) complex forms which resolves the HJ. The cofactor is Mg(2+).

The protein localises to the cytoplasm. It catalyses the reaction Endonucleolytic cleavage at a junction such as a reciprocal single-stranded crossover between two homologous DNA duplexes (Holliday junction).. Functionally, the RuvA-RuvB-RuvC complex processes Holliday junction (HJ) DNA during genetic recombination and DNA repair. Endonuclease that resolves HJ intermediates. Cleaves cruciform DNA by making single-stranded nicks across the HJ at symmetrical positions within the homologous arms, yielding a 5'-phosphate and a 3'-hydroxyl group; requires a central core of homology in the junction. The consensus cleavage sequence is 5'-(A/T)TT(C/G)-3'. Cleavage occurs on the 3'-side of the TT dinucleotide at the point of strand exchange. HJ branch migration catalyzed by RuvA-RuvB allows RuvC to scan DNA until it finds its consensus sequence, where it cleaves and resolves the cruciform DNA. The protein is Crossover junction endodeoxyribonuclease RuvC of Xanthomonas oryzae pv. oryzae (strain MAFF 311018).